We begin with the raw amino-acid sequence, 227 residues long: N-(5'-phosphoribosyl)anthranilate isomerase (227 aa).

The protein belongs to the TrpF family.

It carries out the reaction N-(5-phospho-beta-D-ribosyl)anthranilate = 1-(2-carboxyphenylamino)-1-deoxy-D-ribulose 5-phosphate. The protein operates within amino-acid biosynthesis; L-tryptophan biosynthesis; L-tryptophan from chorismate: step 3/5. The chain is N-(5'-phosphoribosyl)anthranilate isomerase from Herminiimonas arsenicoxydans.